Reading from the N-terminus, the 449-residue chain is SUPPRESSOR OF GAMMA RESPONSE 1 (449 aa).

Residues 58-211 (LPRGVKFDPS…DYVVSKIFYQ (154 aa)) form the NAC domain. Residues 167–217 (RGCKKIMVLYGGKAVKTNWVMHQYHLGIEEDEKEGDYVVSKIFYQQPQQLV) mediate DNA binding. Residues 324 to 336 (DDKEEQEKDRDNE) show a composition bias toward basic and acidic residues. Residues 324–348 (DDKEEQEKDRDNENQGEEDPTWFDS) are disordered.

Phosphorylated in a DNA stress-independent manner. Hyperphosphorylated on SQ motifs upon double-strand breaks, H(2)O(2) or zeocin treatments. Hyperphosphorylation is required for SOG1 function, and unlike constitutive phosphorylation, is ATM dependent. In terms of tissue distribution, expressed in shoot and root apical meristems, in lateral root primordia, in the vasculature of young leaves and in the root stele.

The protein localises to the nucleus. Functionally, transcription factor regulating the transcriptional activation response to gamma irradiation. Required for stem-cell death induced by UVB or by gamma irradiation. Not required for ATM activation, but participates in pathways governed by both ATM and ATR sensor kinases. Involved in DNA damage response (DDR) system that regulates cell cycle arrest. Functional homolog of animal p53. Regulates SMR5 and SMR7 transcription. Regulates DNA repair and cytokinin signaling separately and plays a key role in controlling lateral root formation under genotoxic stress. The polypeptide is SUPPRESSOR OF GAMMA RESPONSE 1 (Arabidopsis thaliana (Mouse-ear cress)).